A 413-amino-acid polypeptide reads, in one-letter code: Tyrosine--tRNA ligase (413 aa).

An L-tyrosine-binding site is contributed by Tyr-33. The 'HIGH' region motif lies at 38-47 (PTADSLHVGH). 2 residues coordinate L-tyrosine: Tyr-162 and Gln-166. Residues 225-229 (KFGKT) carry the 'KMSKS' region motif. Lys-228 contacts ATP. One can recognise an S4 RNA-binding domain in the interval 346–413 (TSAIDAIVNV…KKKYYLLEIK (68 aa)).

The protein belongs to the class-I aminoacyl-tRNA synthetase family. TyrS type 1 subfamily. As to quaternary structure, homodimer.

It is found in the cytoplasm. It catalyses the reaction tRNA(Tyr) + L-tyrosine + ATP = L-tyrosyl-tRNA(Tyr) + AMP + diphosphate + H(+). Its function is as follows. Catalyzes the attachment of tyrosine to tRNA(Tyr) in a two-step reaction: tyrosine is first activated by ATP to form Tyr-AMP and then transferred to the acceptor end of tRNA(Tyr). This Mesoplasma florum (strain ATCC 33453 / NBRC 100688 / NCTC 11704 / L1) (Acholeplasma florum) protein is Tyrosine--tRNA ligase.